Consider the following 635-residue polypeptide: S-type anion channel SLAH3 (635 aa).

Residues 1–253 (MEEKPNYVIQ…IVLPNDKKWP (253 aa)) lie on the Cytoplasmic side of the membrane. The segment covering 102-121 (SDPTTSLSSENHKNSGSTGK) has biased composition (polar residues). A disordered region spans residues 102-173 (SDPTTSLSSE…SGHHQNQNQA (72 aa)). Basic residues predominate over residues 153-165 (NHHHHLHRQHQSG). A Phosphoserine modification is found at Ser189. Residues 193–217 (ERQFTRKPASVEPEAPNRNNQNLNT) form a disordered region. The helical transmembrane segment at 254-276 (FLLRYPISTFGMCLGVSSQAIMW) threads the bilayer. Over 277-299 (KTLATAEPTKFLHVPLWINQGLW) the chain is Extracellular. Residues 300–320 (FISVALILTIATIYLLKIILF) traverse the membrane as a helical segment. At 321-335 (FEAVRREYYHPIRIN) the chain is on the cytoplasmic side. The chain crosses the membrane as a helical span at residues 336 to 356 (FFFAPFISLLFLALGVPPSII). Over 357 to 358 (TD) the chain is Extracellular. A helical transmembrane segment spans residues 359–379 (LPHFLWYLLMFPFICLELKIY). Over 380 to 396 (GQWMSGGQRRLSRVANP) the chain is Cytoplasmic. The helical transmembrane segment at 397–417 (TNHLSVVGNFVGALLGASMGL) threads the bilayer. Residues 418 to 419 (RE) are Extracellular-facing. Residues 420–440 (GPIFFYAVGMAHYLVLFVTLY) form a helical membrane-spanning segment. Residues 441-455 (QRLPTNETLPKDLHP) lie on the Cytoplasmic side of the membrane. Residues 456-476 (VFFLFVAAPSVASMAWAKVTG) form a helical membrane-spanning segment. A topological domain (extracellular) is located at residue Ser477. A helical membrane pass occupies residues 478 to 498 (FDYGSKVCYFIAIFLYFSLAV). Topologically, residues 499-504 (RINFFR) are cytoplasmic. Residues 505–525 (GIKFSLSWWAYTFPMTGAAIA) form a helical membrane-spanning segment. Topologically, residues 526–541 (TIRYATVVKSTMTQIM) are extracellular. Residues 542–562 (CVVLCAIATLVVFALLVTTII) form a helical membrane-spanning segment. Residues 563–635 (HAFVLRDLFP…NGKTQESDSS (73 aa)) are Cytoplasmic-facing. The interval 611-635 (FTDSDSSQSNDVEACNGKTQESDSS) is disordered. Residues 614-635 (SDSSQSNDVEACNGKTQESDSS) show a composition bias toward polar residues.

This sequence belongs to the SLAC1 S-type anion channel family. As to quaternary structure, homotrimer. Interacts with KAT1. In terms of tissue distribution, expressed in the whole plant, escpecially in vascular systems.

It localises to the cell membrane. Slow, weak voltage-dependent S-type anion efflux channel involved in maintenance of anion homeostasis. Binds to the highly selective inward-rectifying potassium channel KAT1 and inhibits its activity. Functions as an essential negative regulator of inward potassium channels in guard cells. Essential for the efficient stomatal closure and opening in guard cells. This is S-type anion channel SLAH3 (SLAH3) from Arabidopsis thaliana (Mouse-ear cress).